Here is a 124-residue protein sequence, read N- to C-terminus: Large ribosomal subunit protein bL12 (124 aa).

It belongs to the bacterial ribosomal protein bL12 family. In terms of assembly, homodimer. Part of the ribosomal stalk of the 50S ribosomal subunit. Forms a multimeric L10(L12)X complex, where L10 forms an elongated spine to which 2 to 4 L12 dimers bind in a sequential fashion. Binds GTP-bound translation factors.

Forms part of the ribosomal stalk which helps the ribosome interact with GTP-bound translation factors. Is thus essential for accurate translation. The sequence is that of Large ribosomal subunit protein bL12 from Akkermansia muciniphila (strain ATCC BAA-835 / DSM 22959 / JCM 33894 / BCRC 81048 / CCUG 64013 / CIP 107961 / Muc).